Here is a 421-residue protein sequence, read N- to C-terminus: MPKQIDTILINIGQLLTMESSGPRAGKSMQDLHVIEDAVVGIHEQKIVFAGQKGAEAGYEADEIIDCSGRLVTPGLVDPHTHLVFGGSREKEMNLKLQGISYLDILAQGGGILSTVKDTRAASEEELLQKAHFHLQRMLSYGTTTAEVKSGYGLEKETELKQLRVAKKLHESQPVDLVSTFMGAHAIPPEYQNDPDDFLDQMLSLLPEIKEQELASFADIFTETGVFTVSQSRRYLQKAAEAGFGLKIHADEIDPLGGAELAGKLKAVSADHLVGTSDEGIKKLAEAGTIAVLLPGTTFYLGKSTYARARAMIDEGVCVSLATDFNPGSSPTENIQLIMSIAALHLKMTAEEIWHAVTVNAAYAIGKGEEAGQLKAGRSADLVIWQAPNYMYIPYHYGVNHVHQVMKNGTIVVNREGAILG.

Positions 80 and 82 each coordinate Fe(3+). Zn(2+) is bound by residues His80 and His82. Positions 89, 152, and 185 each coordinate 4-imidazolone-5-propanoate. Tyr152 serves as a coordination point for N-formimidoyl-L-glutamate. Fe(3+) is bound at residue His249. His249 is a Zn(2+) binding site. Residue Glu252 coordinates 4-imidazolone-5-propanoate. Asp324 contributes to the Fe(3+) binding site. Zn(2+) is bound at residue Asp324. The N-formimidoyl-L-glutamate site is built by Asn326 and Gly328. 4-imidazolone-5-propanoate is bound at residue Ser329.

The protein belongs to the metallo-dependent hydrolases superfamily. HutI family. As to quaternary structure, homodimer. It depends on Zn(2+) as a cofactor. Fe(3+) serves as cofactor.

Its subcellular location is the cytoplasm. It carries out the reaction 4-imidazolone-5-propanoate + H2O = N-formimidoyl-L-glutamate. Its pathway is amino-acid degradation; L-histidine degradation into L-glutamate; N-formimidoyl-L-glutamate from L-histidine: step 3/3. Catalyzes the hydrolytic cleavage of the carbon-nitrogen bond in imidazolone-5-propanoate to yield N-formimidoyl-L-glutamate. It is the third step in the universal histidine degradation pathway. The sequence is that of Imidazolonepropionase from Bacillus subtilis (strain 168).